A 128-amino-acid chain; its full sequence is MSGRGKQGGKARAKAKTRSSRAGLQFPVGRVHRLLRKGNYAERVGAGAPVYLAAVLEYLTAEILELAGNAARDNKKTRIIPRHLQLAIRNDEELNKLLGKVTIAQGGVLPNIQAVLLPKKTESHHKAK.

Residues methionine 1–alanine 22 are disordered. Serine 2 carries the N-acetylserine modification. Serine 2 bears the Phosphoserine; by RPS6KA5 mark. Position 4 is a citrulline; alternate (arginine 4). Residue arginine 4 is modified to Symmetric dimethylarginine; by PRMT5; alternate. The residue at position 6 (lysine 6) is an N6-(2-hydroxyisobutyryl)lysine. Positions glutamine 7–serine 19 are enriched in basic residues. Lysine 10 carries the post-translational modification N6-(2-hydroxyisobutyryl)lysine; alternate. N6-(beta-hydroxybutyryl)lysine; alternate is present on residues lysine 10 and lysine 14. Lysine 10 bears the N6-lactoyllysine; alternate mark. Lysine 10 is subject to N6-succinyllysine; alternate. Lysine 14 is covalently cross-linked (Glycyl lysine isopeptide (Lys-Gly) (interchain with G-Cter in ubiquitin); alternate). Lysine 16 participates in a covalent cross-link: Glycyl lysine isopeptide (Lys-Gly) (interchain with G-Cter in ubiquitin). Lysine 37 carries the post-translational modification N6-(2-hydroxyisobutyryl)lysine; alternate. At lysine 37 the chain carries N6-(beta-hydroxybutyryl)lysine; alternate. Lysine 37 carries the post-translational modification N6-crotonyllysine; alternate. An N6-(2-hydroxyisobutyryl)lysine mark is found at lysine 75 and lysine 76. Position 96 is an N6-(2-hydroxyisobutyryl)lysine; alternate (lysine 96). N6-(beta-hydroxybutyryl)lysine; alternate is present on lysine 96. Lysine 96 is modified (N6-succinyllysine; alternate). Lysine 96 is subject to N6-glutaryllysine; alternate. N6-glutaryllysine is present on lysine 100. Glutamine 105 carries the N5-methylglutamine modification. Lysine 119 carries the N6-(2-hydroxyisobutyryl)lysine; alternate modification. The residue at position 119 (lysine 119) is an N6-(beta-hydroxybutyryl)lysine; alternate. Lysine 119 and lysine 120 each carry N6-crotonyllysine; alternate. 2 positions are modified to N6-glutaryllysine; alternate: lysine 119 and lysine 120. Lysine 120 is covalently cross-linked (Glycyl lysine isopeptide (Lys-Gly) (interchain with G-Cter in ubiquitin); alternate). Phosphothreonine; by DCAF1 is present on threonine 121. Lysine 126 is modified (N6-crotonyllysine; alternate). Lysine 126 carries the post-translational modification N6-glutaryllysine; alternate.

This sequence belongs to the histone H2A family. The nucleosome is a histone octamer containing two molecules each of H2A, H2B, H3 and H4 assembled in one H3-H4 heterotetramer and two H2A-H2B heterodimers. The octamer wraps approximately 147 bp of DNA. Post-translationally, deiminated on Arg-4 in granulocytes upon calcium entry. In terms of processing, monoubiquitination of Lys-120 (H2AK119Ub) by RING1, TRIM37 and RNF2/RING2 complex gives a specific tag for epigenetic transcriptional repression and participates in X chromosome inactivation of female mammals. It is involved in the initiation of both imprinted and random X inactivation. Ubiquitinated H2A is enriched in inactive X chromosome chromatin. Ubiquitination of H2A functions downstream of methylation of 'Lys-27' of histone H3 (H3K27me). H2AK119Ub by RNF2/RING2 can also be induced by ultraviolet and may be involved in DNA repair. Monoubiquitination of Lys-120 (H2AK119Ub) by TRIM37 may promote transformation of cells in a number of breast cancers. Following DNA double-strand breaks (DSBs), it is ubiquitinated through 'Lys-63' linkage of ubiquitin moieties by the E2 ligase UBE2N and the E3 ligases RNF8 and RNF168, leading to the recruitment of repair proteins to sites of DNA damage. Ubiquitination at Lys-14 and Lys-16 (H2AK13Ub and H2AK15Ub, respectively) in response to DNA damage is initiated by RNF168 that mediates monoubiquitination at these 2 sites, and 'Lys-63'-linked ubiquitin are then conjugated to monoubiquitin; RNF8 is able to extend 'Lys-63'-linked ubiquitin chains in vitro. Deubiquitinated by USP51 at Lys-14 and Lys-16 (H2AK13Ub and H2AK15Ub, respectively) after damaged DNA is repaired. H2AK119Ub and ionizing radiation-induced 'Lys-63'-linked ubiquitination (H2AK13Ub and H2AK15Ub) are distinct events. Phosphorylation on Ser-2 (H2AS1ph) is enhanced during mitosis. Phosphorylation on Ser-2 by RPS6KA5/MSK1 directly represses transcription. Acetylation of H3 inhibits Ser-2 phosphorylation by RPS6KA5/MSK1. Phosphorylation at Thr-121 (H2AT120ph) by DCAF1 is present in the regulatory region of many tumor suppresor genes and down-regulates their transcription. Post-translationally, glutamine methylation at Gln-105 (H2AQ104me) by FBL is specifically dedicated to polymerase I. It is present at 35S ribosomal DNA locus and impairs binding of the FACT complex. In terms of processing, symmetric dimethylation on Arg-4 by the PRDM1/PRMT5 complex may play a crucial role in the germ-cell lineage. Crotonylation (Kcr) is specifically present in male germ cells and marks testis-specific genes in post-meiotic cells, including X-linked genes that escape sex chromosome inactivation in haploid cells. Crotonylation marks active promoters and enhancers and confers resistance to transcriptional repressors. It is also associated with post-meiotically activated genes on autosomes. Post-translationally, lactylated in macrophages by EP300/P300 by using lactoyl-CoA directly derived from endogenous or exogenous lactate, leading to stimulates gene transcription.

The protein localises to the nucleus. Its subcellular location is the chromosome. In terms of biological role, core component of nucleosome. Nucleosomes wrap and compact DNA into chromatin, limiting DNA accessibility to the cellular machineries which require DNA as a template. Histones thereby play a central role in transcription regulation, DNA repair, DNA replication and chromosomal stability. DNA accessibility is regulated via a complex set of post-translational modifications of histones, also called histone code, and nucleosome remodeling. The polypeptide is Histone H2A type 1-H (Homo sapiens (Human)).